A 474-amino-acid polypeptide reads, in one-letter code: Glutamate--tRNA ligase (474 aa).

Residues 18 to 28 (PSPTGFLHIGG) carry the 'HIGH' region motif. Residues 244–248 (KLSKR) carry the 'KMSKS' region motif. Lysine 247 lines the ATP pocket.

Belongs to the class-I aminoacyl-tRNA synthetase family. Glutamate--tRNA ligase type 1 subfamily. Monomer.

It is found in the cytoplasm. The enzyme catalyses tRNA(Glu) + L-glutamate + ATP = L-glutamyl-tRNA(Glu) + AMP + diphosphate. Its function is as follows. Catalyzes the attachment of glutamate to tRNA(Glu) in a two-step reaction: glutamate is first activated by ATP to form Glu-AMP and then transferred to the acceptor end of tRNA(Glu). This Caulobacter sp. (strain K31) protein is Glutamate--tRNA ligase.